We begin with the raw amino-acid sequence, 444 residues long: E1B 55 kDa protein (444 aa).

The disordered stretch occupies residues 1-35 (MEQNADMEPDRQVNQRPPRFRARGAGVRGRGRVRR). Phosphoserine occurs at positions 438 and 439.

It belongs to the adenoviridae E1B 55 kDa protein family. Interacts with host PML-4 and PML-5; this interaction promotes efficient subnuclear targeting of E1B-55K to PML nuclear bodies. Interacts with E4-ORF3 protein. Interacts with E4-ORF6 protein.

It localises to the host nucleus. The protein resides in the host cytoplasm. Functionally, plays a major role to prevent cellular inhibition of viral genome replication. Assembles an SCF-like E3 ubiquitin ligase complex based on the cellular proteins ELOB, ELOC, CUL5 and RBX1, in cooperation with viral E4orf6. This viral RING-type ligase ubiquitinates cellular substrates and targets them to proteasomal degradation: TP53/p53, LIG4, MRE11-RAD50-NBS1 (MRN) complex, ITGA3, DAXX and BLM. E1B-55K probably acts as the substrate-specific adapter of the SCF-like E3 ubiquitin ligase complex. Degradation of host TP53/p53 activity is essential for preventing E1A-induced TP53 accumulation that would otherwise lead to cell apoptosis and growth arrest. E1B-55K also inactivates TP53 transcription-factor activity by binding its transactivation domain. E1B-55K also functions as a SUMO1 E3 ligase for TP53 which causes the latter to be sequestered in promyelocytic leukemia (PML) nuclear bodies thereby contributing to maximal inhibition of TP53 function. The protein is E1B 55 kDa protein of Canis lupus familiaris (Dog).